The following is a 158-amino-acid chain: MAKVFEGHLIGEGLRFGIVVARFNEFITHKLLSGAQDALIRHGVAENDIEVAWVPGAFEIPLVARRMLARNRYDAVLCLGTVIRGGTPHFEYVASEVAKGVAKVGLETGTPVIFGVITADTIEQAIERAGTKAGNKGWQAAVSGIEMANLVRRLESSS.

5-amino-6-(D-ribitylamino)uracil-binding positions include F23, 57-59, and 81-83; these read AFE and TVI. Residue 86–87 coordinates (2S)-2-hydroxy-3-oxobutyl phosphate; sequence GT. H89 acts as the Proton donor in catalysis. A 5-amino-6-(D-ribitylamino)uracil-binding site is contributed by F114. R128 is a (2S)-2-hydroxy-3-oxobutyl phosphate binding site.

This sequence belongs to the DMRL synthase family.

The catalysed reaction is (2S)-2-hydroxy-3-oxobutyl phosphate + 5-amino-6-(D-ribitylamino)uracil = 6,7-dimethyl-8-(1-D-ribityl)lumazine + phosphate + 2 H2O + H(+). It functions in the pathway cofactor biosynthesis; riboflavin biosynthesis; riboflavin from 2-hydroxy-3-oxobutyl phosphate and 5-amino-6-(D-ribitylamino)uracil: step 1/2. Its function is as follows. Catalyzes the formation of 6,7-dimethyl-8-ribityllumazine by condensation of 5-amino-6-(D-ribitylamino)uracil with 3,4-dihydroxy-2-butanone 4-phosphate. This is the penultimate step in the biosynthesis of riboflavin. The sequence is that of 6,7-dimethyl-8-ribityllumazine synthase from Desulforudis audaxviator (strain MP104C).